Consider the following 88-residue polypeptide: Defensin-like protein 98 (88 aa).

The N-terminal stretch at 1–29 (MGSLRVSTVVIAVVACLSILLISPTEVDG) is a signal peptide. Cystine bridges form between cysteine 33-cysteine 76, cysteine 40-cysteine 62, cysteine 46-cysteine 73, and cysteine 50-cysteine 75.

This sequence belongs to the DEFL family.

It localises to the secreted. This chain is Defensin-like protein 98, found in Arabidopsis thaliana (Mouse-ear cress).